The sequence spans 316 residues: Apolipoprotein E (316 aa).

An N-terminal signal peptide occupies residues 1 to 18 (MKVLWVAVVVALLAGCQA). O-linked (GalNAc...) threonine glycosylation occurs at Thr-32. A run of 8 repeats spans residues 79–100 (ALME…GQLG), 101–122 (PMAQ…ARLG), 123–144 (SDME…AMLG), 145–166 (QSTE…KRLL), 167–188 (RDAD…EGAE), 189–210 (RSLS…SRAA), 211–232 (TLST…QKLH), and 233–254 (GRLE…QQLE). Residues 79–254 (ALMEETMKEV…RLDKIRQQLE (176 aa)) form an 8 X 22 AA approximate tandem repeats region. Met-142 is subject to Methionine sulfoxide. Position 146 is a phosphoserine (Ser-146). Residues 157-167 (HLRKLPKRLLR) are LDL and other lipoprotein receptors binding. 161–164 (LPKR) contacts heparin. The segment at 209–289 (AATLSTLAGQ…SWFEPLVEDM (81 aa)) is lipid-binding and lipoprotein association. An O-linked (GalNAc...) threonine glycan is attached at Thr-211. 228–235 (RQKLHGRL) serves as a coordination point for heparin. The tract at residues 265-316 (NQMRLQAEAFQARLRSWFEPLVEDMQRQWAGLVEKVQLALRPSPTSPPSENH) is homooligomerization. The tract at residues 277-289 (RLRSWFEPLVEDM) is specificity for association with VLDL. A glycan (O-linked (GalNAc...) threonine) is linked at Thr-309. Ser-310 is a glycosylation site (O-linked (GalNAc...) serine).

Belongs to the apolipoprotein A1/A4/E family. As to quaternary structure, homotetramer. May interact with ABCA1; functionally associated with ABCA1 in the biogenesis of HDLs. May interact with APP/A4 amyloid-beta peptide; the interaction is extremely stable in vitro but its physiological significance is unclear. May interact with MAPT. May interact with MAP2. In the cerebrospinal fluid, interacts with secreted SORL1. Interacts with PMEL; this allows the loading of PMEL luminal fragment on ILVs to induce fibril nucleation. APOE exists as multiple glycosylated and sialylated glycoforms within cells and in plasma. The extent of glycosylation and sialylation are tissue and context specific. In terms of processing, glycated in plasma VLDL. Post-translationally, phosphorylated by FAM20C in the extracellular medium.

It is found in the secreted. The protein localises to the extracellular space. The protein resides in the extracellular matrix. Its subcellular location is the extracellular vesicle. It localises to the endosome. It is found in the multivesicular body. In terms of biological role, APOE is an apolipoprotein, a protein associating with lipid particles, that mainly functions in lipoprotein-mediated lipid transport between organs via the plasma and interstitial fluids. APOE is a core component of plasma lipoproteins and is involved in their production, conversion and clearance. Apolipoproteins are amphipathic molecules that interact both with lipids of the lipoprotein particle core and the aqueous environment of the plasma. As such, APOE associates with chylomicrons, chylomicron remnants, very low density lipoproteins (VLDL) and intermediate density lipoproteins (IDL) but shows a preferential binding to high-density lipoproteins (HDL). It also binds a wide range of cellular receptors including the LDL receptor/LDLR and the very low-density lipoprotein receptor/VLDLR that mediate the cellular uptake of the APOE-containing lipoprotein particles. Finally, APOE also has a heparin-binding activity and binds heparan-sulfate proteoglycans on the surface of cells, a property that supports the capture and the receptor-mediated uptake of APOE-containing lipoproteins by cells. The protein is Apolipoprotein E (APOE) of Bos taurus (Bovine).